The chain runs to 548 residues: MAAPPASMSAAPSPLQSAVAPDVPGRQAEQNETACEDRSNAGTLDRLLPPVGTGRSPRKRTTSQCKSEPPLLRTSKRTIYTAGRPPWYNEHGTQSKEAFAIGLGGGSASGKTTVARMIIEALDVPWVVLLSMDSFYKVLTQQQQEQAACNNFNFDHPDAFDFDLIISTLKKLKQGRSVQVPIYDFTTHSRKKDWKTLYGANVIIFEGIMAFADKTLLELLDMKIFVDTDSDIRLVRRLRRDISERGRDIEGVIKQYNKFVKPAFDQYIQPTMRLADIVVPRGSGNTVAIDLIVQHVHSQLEERELSVRAALASAHQCHPLPQTLSVLKSTPQVRGMHTIIRDKETSRDEFIFYSKRLMRLLIEHALSFLPFQDCTVQTPQGQDYVGKCYAGKQITGVSILRAGETMEPALRAVCKDVRIGTILIQTNQLTGEPELHYLRLPKDISDDHVILMDCTVSTGAAAMMAVRVLLDHDVPEDKIFLLSLLMAEMGVHSVAYAFPRVRIITTAVDKRVNDLFRIIPGIGNFGDRYFGTDAVPDGSDDDEAATVG.

The segment covering 1–18 (MAAPPASMSAAPSPLQSA) has biased composition (low complexity). A disordered region spans residues 1-74 (MAAPPASMSA…CKSEPPLLRT (74 aa)). 2 positions are modified to phosphoserine: serine 56 and serine 63. 105–112 (GGSASGKT) contacts ATP. Serine 539 is modified (phosphoserine).

The protein belongs to the uridine kinase family. Interacts with RNF19B. Ubiquitinated by RNF19B; which induces proteasomal degradation.

The protein resides in the cytoplasm. The protein localises to the nucleus. The enzyme catalyses uridine + ATP = UMP + ADP + H(+). It catalyses the reaction cytidine + ATP = CMP + ADP + H(+). It participates in pyrimidine metabolism; UMP biosynthesis via salvage pathway; UMP from uridine: step 1/1. Its function is as follows. May contribute to UTP accumulation needed for blast transformation and proliferation. The chain is Uridine-cytidine kinase-like 1 (Uckl1) from Mus musculus (Mouse).